The sequence spans 482 residues: Bifunctional protein GlmU (482 aa).

A pyrophosphorylase region spans residues 1-238 (MSAIRPAAVV…HREIAGINNR (238 aa)). Residues 12–15 (LAAG), Lys-26, Gln-79, and 84–85 (GT) contribute to the UDP-N-acetyl-alpha-D-glucosamine site. Residue Asp-110 participates in Mg(2+) binding. UDP-N-acetyl-alpha-D-glucosamine contacts are provided by Gly-147, Glu-163, Asn-178, and Asn-236. Asn-236 contacts Mg(2+). A linker region spans residues 239 to 259 (VQLAEARRILNDRLLTGAMLA). Residues 260 to 482 (GVTVVDPATT…AVSREADGED (223 aa)) form an N-acetyltransferase region. Positions 341 and 359 each coordinate UDP-N-acetyl-alpha-D-glucosamine. Catalysis depends on His-371, which acts as the Proton acceptor. The UDP-N-acetyl-alpha-D-glucosamine site is built by Tyr-374 and Asn-385. Residues Ala-388, 394-395 (NY), Ser-413, Ala-431, and Arg-448 contribute to the acetyl-CoA site. The disordered stretch occupies residues 460–482 (RKRPGSAAAKAAEAVSREADGED). The segment covering 464 to 473 (GSAAAKAAEA) has biased composition (low complexity).

In the N-terminal section; belongs to the N-acetylglucosamine-1-phosphate uridyltransferase family. The protein in the C-terminal section; belongs to the transferase hexapeptide repeat family. In terms of assembly, homotrimer. Mg(2+) is required as a cofactor.

It localises to the cytoplasm. It carries out the reaction alpha-D-glucosamine 1-phosphate + acetyl-CoA = N-acetyl-alpha-D-glucosamine 1-phosphate + CoA + H(+). The enzyme catalyses N-acetyl-alpha-D-glucosamine 1-phosphate + UTP + H(+) = UDP-N-acetyl-alpha-D-glucosamine + diphosphate. It participates in nucleotide-sugar biosynthesis; UDP-N-acetyl-alpha-D-glucosamine biosynthesis; N-acetyl-alpha-D-glucosamine 1-phosphate from alpha-D-glucosamine 6-phosphate (route II): step 2/2. Its pathway is nucleotide-sugar biosynthesis; UDP-N-acetyl-alpha-D-glucosamine biosynthesis; UDP-N-acetyl-alpha-D-glucosamine from N-acetyl-alpha-D-glucosamine 1-phosphate: step 1/1. The protein operates within bacterial outer membrane biogenesis; LPS lipid A biosynthesis. Its function is as follows. Catalyzes the last two sequential reactions in the de novo biosynthetic pathway for UDP-N-acetylglucosamine (UDP-GlcNAc). The C-terminal domain catalyzes the transfer of acetyl group from acetyl coenzyme A to glucosamine-1-phosphate (GlcN-1-P) to produce N-acetylglucosamine-1-phosphate (GlcNAc-1-P), which is converted into UDP-GlcNAc by the transfer of uridine 5-monophosphate (from uridine 5-triphosphate), a reaction catalyzed by the N-terminal domain. The chain is Bifunctional protein GlmU from Streptomyces coelicolor (strain ATCC BAA-471 / A3(2) / M145).